A 78-amino-acid polypeptide reads, in one-letter code: Putative membrane protein insertion efficiency factor (78 aa).

Belongs to the UPF0161 family.

The protein localises to the cell membrane. Functionally, could be involved in insertion of integral membrane proteins into the membrane. The protein is Putative membrane protein insertion efficiency factor of Bacillus mycoides (strain KBAB4) (Bacillus weihenstephanensis).